A 437-amino-acid polypeptide reads, in one-letter code: Amino-acid acetyltransferase (437 aa).

Residues Glu289 to Lys429 enclose the N-acetyltransferase domain.

This sequence belongs to the acetyltransferase family. ArgA subfamily.

The protein resides in the cytoplasm. The enzyme catalyses L-glutamate + acetyl-CoA = N-acetyl-L-glutamate + CoA + H(+). Its pathway is amino-acid biosynthesis; L-arginine biosynthesis; N(2)-acetyl-L-ornithine from L-glutamate: step 1/4. This Actinobacillus pleuropneumoniae serotype 7 (strain AP76) protein is Amino-acid acetyltransferase.